A 401-amino-acid chain; its full sequence is S-adenosylmethionine synthase (401 aa).

His-16 is an ATP binding site. Asp-18 contributes to the Mg(2+) binding site. Glu-44 lines the K(+) pocket. The L-methionine site is built by Glu-57 and Gln-109. The segment at 109–119 (QSAHIAQGVDA) is flexible loop. ATP contacts are provided by residues 174–176 (DAK), Asp-251, 257–258 (RK), Ala-274, and Lys-278. Asp-251 lines the L-methionine pocket. Position 282 (Lys-282) interacts with L-methionine.

It belongs to the AdoMet synthase family. As to quaternary structure, homotetramer; dimer of dimers. The cofactor is Mg(2+). It depends on K(+) as a cofactor.

Its subcellular location is the cytoplasm. It catalyses the reaction L-methionine + ATP + H2O = S-adenosyl-L-methionine + phosphate + diphosphate. The protein operates within amino-acid biosynthesis; S-adenosyl-L-methionine biosynthesis; S-adenosyl-L-methionine from L-methionine: step 1/1. Its function is as follows. Catalyzes the formation of S-adenosylmethionine (AdoMet) from methionine and ATP. The overall synthetic reaction is composed of two sequential steps, AdoMet formation and the subsequent tripolyphosphate hydrolysis which occurs prior to release of AdoMet from the enzyme. The sequence is that of S-adenosylmethionine synthase from Novosphingobium aromaticivorans (strain ATCC 700278 / DSM 12444 / CCUG 56034 / CIP 105152 / NBRC 16084 / F199).